Reading from the N-terminus, the 837-residue chain is Exonuclease 1 (837 aa).

The segment at 1 to 99 is N-domain; it reads MGIQGLLQFI…RSRRERRQSN (99 aa). Mg(2+) is bound by residues aspartate 30, aspartate 78, glutamate 150, aspartate 152, aspartate 171, aspartate 173, and aspartate 225. An interaction with MSH3 region spans residues 129 to 386; sequence MAHKVIKAAR…RLEVNSVSHA (258 aa). An I-domain region spans residues 138-229; it reads RALGVDCLVA…ILSGCDYLAS (92 aa). Disordered regions lie at residues 345–367 and 440–477; these read TMPA…PGTN and IKEN…PSKM. The segment at 387–488 is interaction with MLH1; the sequence is PQLKEKPSTL…NKFATFLQRR (102 aa). Over residues 449–462 the composition is skewed to polar residues; the sequence is TSPNSSKMSKSCPD. Lysine 480 carries the post-translational modification N6-acetyllysine. Residues 555 to 589 form a disordered region; it reads NGTHNLSSQIPGNAAVSPEDEAQSSETSKLLGAMS. A compositionally biased stretch (polar residues) spans 556-565; it reads GTHNLSSQIP. Residues serine 589 and serine 601 each carry the phosphoserine modification. Residues 591-837 are interaction with MSH2; sequence PSLGTLRSCF…CVRAQRAIFH (247 aa). The interval 608–740 is disordered; that stretch reads EFSRTPSPSA…GLCRSSSMDS (133 aa). Polar residues-rich tracts occupy residues 611–623, 665–690, and 699–713; these read RTPS…TLQQ, SSRS…SSRD, and NNKS…NSKQ. Threonine 612 carries the post-translational modification Phosphothreonine. A phosphoserine mark is found at serine 614 and serine 666. Serine 737 carries the post-translational modification Phosphoserine. Residues 778–837 are interaction with MLH1; sequence LQTKISELWKNFGFKKDSEKLPSCKKPLSPVKDNIQLTPETEDEIFNKPECVRAQRAIFH.

It belongs to the XPG/RAD2 endonuclease family. EXO1 subfamily. In terms of assembly, interacts with the MLH1-PMS2 heterodimer via MLH1. Interacts with MSH3. Interacts with the MSH2-MSH6 heterodimer via MSH2, and this interaction may increase the processivity of the 5'-&gt;3' exonuclease activity. Interacts with PCNA, and this interaction may both stimulate the cryptic 3'-&gt;5' exonuclease activity and suppress the 5'-&gt;3' exonuclease activity. Interacts with WRN, and this interaction stimulates both the 5'-&gt;3' exonuclease activity and cleavage of 5'-overhanging flap structures. Interacts with RECQL/RECQ1, and this interaction stimulates cleavage of 5'-overhanging flap structures. Interacts with DNA helicase ZGRF1; the interaction is increased following DNA damage induction. It depends on Mg(2+) as a cofactor. Post-translationally, phosphorylated upon DNA damage and in response to agents stalling DNA replication, probably by ATM or ATR. Highly expressed in the spleen and testis. Also expressed in the bone marrow, brain, lung, lymph node and thymus.

It localises to the nucleus. In terms of biological role, 5'-&gt;3' double-stranded DNA exonuclease which may also possess a cryptic 3'-&gt;5' double-stranded DNA exonuclease activity. Functions in DNA mismatch repair (MMR) to excise mismatch-containing DNA tracts directed by strand breaks located either 5' or 3' to the mismatch. Also exhibits endonuclease activity against 5'-overhanging flap structures similar to those generated by displacement synthesis when DNA polymerase encounters the 5'-end of a downstream Okazaki fragment. Required for somatic hypermutation (SHM) and class switch recombination (CSR) of immunoglobulin genes. Essential for male and female meiosis. In Mus musculus (Mouse), this protein is Exonuclease 1 (Exo1).